We begin with the raw amino-acid sequence, 455 residues long: UDP-N-acetylmuramate--L-alanine ligase (455 aa).

109-115 serves as a coordination point for ATP; sequence GTHGKTT.

The protein belongs to the MurCDEF family.

The protein localises to the cytoplasm. The catalysed reaction is UDP-N-acetyl-alpha-D-muramate + L-alanine + ATP = UDP-N-acetyl-alpha-D-muramoyl-L-alanine + ADP + phosphate + H(+). It functions in the pathway cell wall biogenesis; peptidoglycan biosynthesis. Cell wall formation. In Caldicellulosiruptor bescii (strain ATCC BAA-1888 / DSM 6725 / KCTC 15123 / Z-1320) (Anaerocellum thermophilum), this protein is UDP-N-acetylmuramate--L-alanine ligase.